The primary structure comprises 360 residues: Protein MGF 360-1L (360 aa).

This sequence belongs to the asfivirus MGF 360 family.

Its function is as follows. Plays a role in virus cell tropism, and may be required for efficient virus replication in macrophages. This African swine fever virus (strain Badajoz 1971 Vero-adapted) (Ba71V) protein is Protein MGF 360-1L.